Reading from the N-terminus, the 579-residue chain is MEKRVKYKSFVKDPGTLGSLELSEVMLLFVPNDPKSDLKLKVQTHNIKSQKYTKEGSNKPPWLNLTSKQGRSHIFEFENYPDMHACRDFITKALAKCEEEPNKLVVLTPAEQLSMAEFELRFKLLRENSELQKLHKQFVESKVLTEDEFWSTRKKLLGKDSIRKSKQQMGLKSMMVSGIKPSTDGRTNRVTFNLTSEIIFQIFAEKPAVRQAFINYVPKKMTEKDFWTKYFRAEYLYSTKNTAVAAAEAAEDEELAVFLKPDEILAQEARQKMRRVDPTLDMDADEGDDYTHLMDHGIQRDGTNDIIEPQNDQLKRSLLQDLNRHAAVVLEGRCINVQSEDTRIVAEALTRAKQVSKADGEITKDANQERLERMSRATEMEDLQAPQNFPLAPLSIKDPRDYFESQQGNILSEPRGAKASKRNVHEAYGLLKESILVIRMTGLSDPLIKPEVSFEVFSSLTRTISTAKNILGKNPQESFLDRLPKSTKDEVIHHWTSIQELVRHFWSSYPITTTYLSTKVGKLKDAMSNTYSLLDAMKQSVQSDLRHQVSLLVRPMQQALDAAFQHYESDLQRRTAKIT.

BSD domains lie at 107–161 (LTPA…GKDS) and 186–238 (RTNR…YLYS).

It belongs to the TFB1 family. In terms of assembly, component of the 7-subunit TFIIH core complex composed of XPB, XPD, TFB1/GTF2H1, GTF2H2/P44, TFB4/GTF2H3, TFB2/GTF2H4 and TFB5/GTF2H5, which is active in NER. The core complex associates with the 3-subunit CDK-activating kinase (CAK) module composed of CYCH1/cyclin H1, CDKD and MAT1/At4g30820 to form the 10-subunit holoenzyme (holo-TFIIH) active in transcription.

The protein resides in the nucleus. In terms of biological role, component of the general transcription and DNA repair factor IIH (TFIIH) core complex, which is involved in general and transcription-coupled nucleotide excision repair (NER) of damaged DNA and, when complexed to CAK, in RNA transcription by RNA polymerase II. In NER, TFIIH acts by opening DNA around the lesion to allow the excision of the damaged oligonucleotide and its replacement by a new DNA fragment. In transcription, TFIIH has an essential role in transcription initiation. When the pre-initiation complex (PIC) has been established, TFIIH is required for promoter opening and promoter escape. Phosphorylation of the C-terminal tail (CTD) of the largest subunit of RNA polymerase II by the kinase module CAK controls the initiation of transcription. In Arabidopsis thaliana (Mouse-ear cress), this protein is General transcription and DNA repair factor IIH subunit TFB1-3.